We begin with the raw amino-acid sequence, 201 residues long: Large ribosomal subunit protein uL4 (201 aa).

The interval 44-71 (RAQKTRAEVSGSGKKPWRQKGTGRARSG) is disordered.

The protein belongs to the universal ribosomal protein uL4 family. Part of the 50S ribosomal subunit.

Functionally, one of the primary rRNA binding proteins, this protein initially binds near the 5'-end of the 23S rRNA. It is important during the early stages of 50S assembly. It makes multiple contacts with different domains of the 23S rRNA in the assembled 50S subunit and ribosome. Its function is as follows. Forms part of the polypeptide exit tunnel. In Proteus mirabilis (strain HI4320), this protein is Large ribosomal subunit protein uL4.